Consider the following 202-residue polypeptide: Matrix protein (202 aa).

The short motif at 35-38 (PPEY) is the PPXY motif element. The essential for glycoprotein binding stretch occupies residues 115 to 151 (KLRRTLIFQWADSRGPLEGEELEYSQEITWDDDTEFV).

It belongs to the lyssavirus matrix protein family. Homomultimer. Interacts with nucleoprotein and with the cytoplasmic domain of glycoprotein. Interacts with host ATP6V1A; this interaction plays an important role in virion uncoating after viral entry.

The protein resides in the virion membrane. Its subcellular location is the host endomembrane system. It localises to the host cytoplasm. Plays a major role in assembly, budding and uncoating of virion after membrane fusion. Completely covers the ribonucleoprotein coil and keep it in condensed bullet-shaped form. Inhibits viral transcription and stimulates replication. Plays a major role in early induction of TRAIL-mediated apoptosis in infected neurons. Inhibits the integrated stress response (ISR) in the infected cell by blocking the formation of stress granules. The protein is Matrix protein (M) of Rabies virus (strain CVS-11) (RABV).